The primary structure comprises 697 residues: Elongation factor G 2 (697 aa).

The region spanning 5–280 is the tr-type G domain; sequence SLYRNIGIFA…AVVDYLPSPT (276 aa). GTP contacts are provided by residues 14-21, 78-82, and 132-135; these read AHVDAGKT, DTPGH, and NKLD.

This sequence belongs to the TRAFAC class translation factor GTPase superfamily. Classic translation factor GTPase family. EF-G/EF-2 subfamily.

It localises to the cytoplasm. Functionally, catalyzes the GTP-dependent ribosomal translocation step during translation elongation. During this step, the ribosome changes from the pre-translocational (PRE) to the post-translocational (POST) state as the newly formed A-site-bound peptidyl-tRNA and P-site-bound deacylated tRNA move to the P and E sites, respectively. Catalyzes the coordinated movement of the two tRNA molecules, the mRNA and conformational changes in the ribosome. In Saccharophagus degradans (strain 2-40 / ATCC 43961 / DSM 17024), this protein is Elongation factor G 2.